The following is a 156-amino-acid chain: NAD(P)H-quinone oxidoreductase subunit N (156 aa).

Belongs to the complex I NdhN subunit family. As to quaternary structure, NDH-1 can be composed of about 15 different subunits; different subcomplexes with different compositions have been identified which probably have different functions.

The protein localises to the cellular thylakoid membrane. The catalysed reaction is a plastoquinone + NADH + (n+1) H(+)(in) = a plastoquinol + NAD(+) + n H(+)(out). It carries out the reaction a plastoquinone + NADPH + (n+1) H(+)(in) = a plastoquinol + NADP(+) + n H(+)(out). Its function is as follows. NDH-1 shuttles electrons from an unknown electron donor, via FMN and iron-sulfur (Fe-S) centers, to quinones in the respiratory and/or the photosynthetic chain. The immediate electron acceptor for the enzyme in this species is believed to be plastoquinone. Couples the redox reaction to proton translocation, and thus conserves the redox energy in a proton gradient. Cyanobacterial NDH-1 also plays a role in inorganic carbon-concentration. The chain is NAD(P)H-quinone oxidoreductase subunit N from Prochlorococcus marinus (strain MIT 9515).